An 86-amino-acid chain; its full sequence is Cytochrome c oxidase subunit 6B1 (86 aa).

At A2 the chain carries N-acetylalanine. Residues 27–73 (TRNCWQNYLDFHRCEKAMTAKGGDVSVCEWYRRVYKSLCPISWVSTW) enclose the CHCH domain. The short motif at 30–40 (CWQNYLDFHRC) is the Cx9C motif element. Intrachain disulfides connect C30–C65 and C40–C54. The Cx10C motif motif lies at 54 to 65 (CEWYRRVYKSLC). N6-acetyllysine is present on K62.

The protein belongs to the cytochrome c oxidase subunit 6B family. In terms of assembly, component of the cytochrome c oxidase (complex IV, CIV), a multisubunit enzyme composed of 14 subunits. The complex is composed of a catalytic core of 3 subunits MT-CO1, MT-CO2 and MT-CO3, encoded in the mitochondrial DNA, and 11 supernumerary subunits COX4I, COX5A, COX5B, COX6A, COX6B, COX6C, COX7A, COX7B, COX7C, COX8 and NDUFA4, which are encoded in the nuclear genome. The complex exists as a monomer or a dimer and forms supercomplexes (SCs) in the inner mitochondrial membrane with NADH-ubiquinone oxidoreductase (complex I, CI) and ubiquinol-cytochrome c oxidoreductase (cytochrome b-c1 complex, complex III, CIII), resulting in different assemblies (supercomplex SCI(1)III(2)IV(1) and megacomplex MCI(2)III(2)IV(2)).

It localises to the mitochondrion inner membrane. It participates in energy metabolism; oxidative phosphorylation. In terms of biological role, component of the cytochrome c oxidase, the last enzyme in the mitochondrial electron transport chain which drives oxidative phosphorylation. The respiratory chain contains 3 multisubunit complexes succinate dehydrogenase (complex II, CII), ubiquinol-cytochrome c oxidoreductase (cytochrome b-c1 complex, complex III, CIII) and cytochrome c oxidase (complex IV, CIV), that cooperate to transfer electrons derived from NADH and succinate to molecular oxygen, creating an electrochemical gradient over the inner membrane that drives transmembrane transport and the ATP synthase. Cytochrome c oxidase is the component of the respiratory chain that catalyzes the reduction of oxygen to water. Electrons originating from reduced cytochrome c in the intermembrane space (IMS) are transferred via the dinuclear copper A center (CU(A)) of subunit 2 and heme A of subunit 1 to the active site in subunit 1, a binuclear center (BNC) formed by heme A3 and copper B (CU(B)). The BNC reduces molecular oxygen to 2 water molecules using 4 electrons from cytochrome c in the IMS and 4 protons from the mitochondrial matrix. This chain is Cytochrome c oxidase subunit 6B1 (COX6B1), found in Carlito syrichta (Philippine tarsier).